We begin with the raw amino-acid sequence, 338 residues long: Ketol-acid reductoisomerase (NADP(+)) (338 aa).

The KARI N-terminal Rossmann domain occupies Met-1 to Thr-181. Residues Tyr-24 to Gln-27, Arg-47, and Ser-52 contribute to the NADP(+) site. His-107 is an active-site residue. Gly-133 is an NADP(+) binding site. Residues Asn-182–Ile-327 form the KARI C-terminal knotted domain. Mg(2+)-binding residues include Asp-190, Glu-194, Glu-226, and Glu-230. Ser-251 lines the substrate pocket.

It belongs to the ketol-acid reductoisomerase family. The cofactor is Mg(2+).

The catalysed reaction is (2R)-2,3-dihydroxy-3-methylbutanoate + NADP(+) = (2S)-2-acetolactate + NADPH + H(+). The enzyme catalyses (2R,3R)-2,3-dihydroxy-3-methylpentanoate + NADP(+) = (S)-2-ethyl-2-hydroxy-3-oxobutanoate + NADPH + H(+). The protein operates within amino-acid biosynthesis; L-isoleucine biosynthesis; L-isoleucine from 2-oxobutanoate: step 2/4. It functions in the pathway amino-acid biosynthesis; L-valine biosynthesis; L-valine from pyruvate: step 2/4. Functionally, involved in the biosynthesis of branched-chain amino acids (BCAA). Catalyzes an alkyl-migration followed by a ketol-acid reduction of (S)-2-acetolactate (S2AL) to yield (R)-2,3-dihydroxy-isovalerate. In the isomerase reaction, S2AL is rearranged via a Mg-dependent methyl migration to produce 3-hydroxy-3-methyl-2-ketobutyrate (HMKB). In the reductase reaction, this 2-ketoacid undergoes a metal-dependent reduction by NADPH to yield (R)-2,3-dihydroxy-isovalerate. This chain is Ketol-acid reductoisomerase (NADP(+)), found in Ralstonia nicotianae (strain ATCC BAA-1114 / GMI1000) (Ralstonia solanacearum).